The primary structure comprises 84 residues: Large ribosomal subunit protein eL34 (84 aa).

It belongs to the eukaryotic ribosomal protein eL34 family.

In Pyrobaculum aerophilum (strain ATCC 51768 / DSM 7523 / JCM 9630 / CIP 104966 / NBRC 100827 / IM2), this protein is Large ribosomal subunit protein eL34 (ribL34e).